Consider the following 173-residue polypeptide: Signal peptidase complex catalytic subunit SEC11 (173 aa).

Topologically, residues 1–15 (MLGVSGMQPRQLAAQ) are cytoplasmic. Residues 16 to 36 (ILNFALVLSTAFMMWKGLSVV) form a helical; Signal-anchor for type II membrane protein membrane-spanning segment. At 37 to 173 (SDSSSPIVVV…MGVMVVLQRE (137 aa)) the chain is on the lumenal side. Residues Ser50, His89, and Asp115 each act as charge relay system in the active site. Positions 159-170 (VMLGLMGVMVVL) are C-terminal short (CTS) helix.

This sequence belongs to the peptidase S26B family. As to quaternary structure, component of the signal peptidase complex (SPC) composed of a catalytic subunit SEC11 and three accessory subunits SPC1, SPC2 and SPC3. The complex induces a local thinning of the ER membrane which is used to measure the length of the signal peptide (SP) h-region of protein substrates. This ensures the selectivity of the complex towards h-regions shorter than 18-20 amino acids. SPC associates with the translocon complex.

It localises to the endoplasmic reticulum membrane. The catalysed reaction is Cleavage of hydrophobic, N-terminal signal or leader sequences from secreted and periplasmic proteins.. Functionally, catalytic component of the signal peptidase complex (SPC) which catalyzes the cleavage of N-terminal signal sequences from nascent proteins as they are translocated into the lumen of the endoplasmic reticulum. Specifically cleaves N-terminal signal peptides that contain a hydrophobic alpha-helix (h-region) shorter than 18-20 amino acids. The protein is Signal peptidase complex catalytic subunit SEC11 (SEC11) of Leptosphaeria maculans (strain JN3 / isolate v23.1.3 / race Av1-4-5-6-7-8) (Blackleg fungus).